Consider the following 660-residue polypeptide: Acetyl-coenzyme A synthetase (660 aa).

Residues 197–200 (RGGK) and threonine 317 each bind CoA. ATP is bound by residues 397–399 (GEP), 421–426 (DTFWQT), aspartate 512, and arginine 528. Serine 536 is a CoA binding site. An ATP-binding site is contributed by arginine 539. 2 residues coordinate Mg(2+): valine 550 and valine 555. Lysine 625 is subject to N6-acetyllysine.

This sequence belongs to the ATP-dependent AMP-binding enzyme family. Mg(2+) is required as a cofactor. In terms of processing, acetylated. Deacetylation by the SIR2-homolog deacetylase activates the enzyme.

The enzyme catalyses acetate + ATP + CoA = acetyl-CoA + AMP + diphosphate. Catalyzes the conversion of acetate into acetyl-CoA (AcCoA), an essential intermediate at the junction of anabolic and catabolic pathways. AcsA undergoes a two-step reaction. In the first half reaction, AcsA combines acetate with ATP to form acetyl-adenylate (AcAMP) intermediate. In the second half reaction, it can then transfer the acetyl group from AcAMP to the sulfhydryl group of CoA, forming the product AcCoA. The chain is Acetyl-coenzyme A synthetase from Ralstonia pickettii (strain 12J).